A 273-amino-acid polypeptide reads, in one-letter code: Progestin and adipoQ receptor family member 4 (273 aa).

6 helical membrane passes run 52–72, 79–99, 115–135, 147–167, 185–205, and 245–265; these read IYTHGLALLGFLVLVPMTMPW, GWLGGTHCVACLAPPAGSVLY, LLALDMCGVCLVNTLGALPII, PAALVGYTVLSGVAGWRALTA, LLVFGARGVGLGSGAPGSLPC, and LLSVGSILQLHAGVVPDLLWA.

It belongs to the ADIPOR family. In terms of assembly, interacts with CERS2 and CERS5; the interaction regulates CERS2 and CERS5 stabilities and activities and is inhibited in presence of ceramides. Relatively widely expressed in a range of tissues. Expressed in subcutaneous white adipose tissue.

Its subcellular location is the golgi apparatus membrane. Functionally, plays a role in maintaining adipose tissue function through the regulation of ceramide levels. Mediates the stability of ceramide synthetases, CERS2 and CERS5, and their activities. The polypeptide is Progestin and adipoQ receptor family member 4 (Homo sapiens (Human)).